Here is a 425-residue protein sequence, read N- to C-terminus: SWI5-dependent HO expression protein 3 (425 aa).

The disordered stretch occupies residues 24 to 45 (NLESSPTKDRNTSSQNASSSRV). Positions 35 to 45 (TSSQNASSSRV) are enriched in polar residues. A coiled-coil region spans residues 68 to 197 (QNLLSKLELA…LELSNQNLNY (130 aa)). The segment at 322 to 425 (RKTPNTNDSS…NSMVVHGAQS (104 aa)) is disordered. Over residues 326 to 338 (NTNDSSSNGNSSN) the composition is skewed to low complexity. A Phosphoserine modification is found at S343. Polar residues-rich tracts occupy residues 345 to 358 (YTAS…SIPK) and 382 to 397 (KTNV…SPTI). S394 carries the phosphoserine modification.

It belongs to the SHE3 family. As to quaternary structure, interacts with SHE2 and MYO4.

It localises to the endoplasmic reticulum membrane. Functionally, RNA-binding protein that binds specific mRNAs including the ASH1 mRNA, coding for a repressor of the HO endonuclease. Part of the mRNA localization machinery that restricts accumulation of certain proteins to the bud and in the daughter cell. Required for the delivery of cortical endoplasmic reticulum into the emerging bud. This is SWI5-dependent HO expression protein 3 (SHE3) from Saccharomyces cerevisiae (strain ATCC 204508 / S288c) (Baker's yeast).